The primary structure comprises 191 residues: Protein Ves (191 aa).

It belongs to the Ves family.

In Escherichia coli (strain K12 / MC4100 / BW2952), this protein is Protein Ves.